Reading from the N-terminus, the 503-residue chain is Alpha-1,3/1,6-mannosyltransferase ALG2 (503 aa).

The next 2 helical transmembrane spans lie at Val-64–Ile-84 and Thr-112–Pro-132. N-linked (GlcNAc...) asparagine glycosylation is found at Asn-170, Asn-303, Asn-371, and Asn-400. The chain crosses the membrane as a helical span at residues Trp-443–Leu-463.

It belongs to the glycosyltransferase group 1 family. Glycosyltransferase 4 subfamily. Interacts with ALG1.

The protein localises to the endoplasmic reticulum membrane. The catalysed reaction is a beta-D-Man-(1-&gt;4)-beta-D-GlcNAc-(1-&gt;4)-alpha-D-GlcNAc-diphospho-di-trans,poly-cis-dolichol + GDP-alpha-D-mannose = an alpha-D-Man-(1-&gt;3)-beta-D-Man-(1-&gt;4)-beta-D-GlcNAc-(1-&gt;4)-alpha-D-GlcNAc-diphospho-di-trans,poly-cis-dolichol + GDP + H(+). It catalyses the reaction an alpha-D-Man-(1-&gt;3)-beta-D-Man-(1-&gt;4)-beta-D-GlcNAc-(1-&gt;4)-alpha-D-GlcNAc-diphospho-di-trans,poly-cis-dolichol + GDP-alpha-D-mannose = an alpha-D-Man-(1-&gt;3)-[alpha-D-Man-(1-&gt;6)]-beta-D-Man-(1-&gt;4)-beta-D-GlcNAc-(1-&gt;4)-alpha-D-GlcNAc-diphospho-di-trans,poly-cis-dolichol + GDP + H(+). Its pathway is protein modification; protein glycosylation. Its function is as follows. Mannosylates Man(2)GlcNAc(2)-dolichol diphosphate and Man(1)GlcNAc(2)-dolichol diphosphate to form Man(3)GlcNAc(2)-dolichol diphosphate. The protein is Alpha-1,3/1,6-mannosyltransferase ALG2 (ALG2) of Saccharomyces cerevisiae (strain ATCC 204508 / S288c) (Baker's yeast).